Reading from the N-terminus, the 107-residue chain is Large ribosomal subunit protein eL33B (107 aa).

Residue Ala-2 is modified to N-acetylalanine; partial. A Glycyl lysine isopeptide (Lys-Gly) (interchain with G-Cter in ubiquitin) cross-link involves residue Lys-47.

This sequence belongs to the eukaryotic ribosomal protein eL33 family. Component of the large ribosomal subunit (LSU). Mature yeast ribosomes consist of a small (40S) and a large (60S) subunit. The 40S small subunit contains 1 molecule of ribosomal RNA (18S rRNA) and 33 different proteins (encoded by 57 genes). The large 60S subunit contains 3 rRNA molecules (25S, 5.8S and 5S rRNA) and 46 different proteins (encoded by 81 genes). In terms of processing, N-terminally acetylated by acetyltransferase NatA.

It localises to the cytoplasm. Its function is as follows. Component of the ribosome, a large ribonucleoprotein complex responsible for the synthesis of proteins in the cell. The small ribosomal subunit (SSU) binds messenger RNAs (mRNAs) and translates the encoded message by selecting cognate aminoacyl-transfer RNA (tRNA) molecules. The large subunit (LSU) contains the ribosomal catalytic site termed the peptidyl transferase center (PTC), which catalyzes the formation of peptide bonds, thereby polymerizing the amino acids delivered by tRNAs into a polypeptide chain. The nascent polypeptides leave the ribosome through a tunnel in the LSU and interact with protein factors that function in enzymatic processing, targeting, and the membrane insertion of nascent chains at the exit of the ribosomal tunnel. The chain is Large ribosomal subunit protein eL33B from Saccharomyces cerevisiae (strain ATCC 204508 / S288c) (Baker's yeast).